Consider the following 263-residue polypeptide: Calpain small subunit 1 (263 aa).

M1 carries the N-acetylmethionine modification. S6 is subject to Phosphoserine. One can recognise an EF-hand 1; atypical domain in the interval 91–125; that stretch reads EEVRQFRRLFAQLAGDDMEVSATELMNILNKVVTR. The Ca(2+) site is built by A104, D107, E109, E114, D132, D147, D149, T151, K153, and E158. EF-hand domains are found at residues 134-167, 164-199, 200-228, and 229-263; these read FGID…NNIK, NNIK…AGFR, LNEH…ISCL, and VRLD…TMYS. K174 bears the N6-acetyllysine mark. The Ca(2+) site is built by D177, D179, S181, T183, E188, and D220.

As to quaternary structure, homodimer or heterodimer of a large (catalytic) and a small (regulatory) subunit. In presence of calcium, the heterodimer dissociates.

Its subcellular location is the cytoplasm. The protein resides in the cell membrane. Regulatory subunit of the calcium-regulated non-lysosomal thiol-protease which catalyzes limited proteolysis of substrates involved in cytoskeletal remodeling and signal transduction. Essential for embryonic development. This Bos taurus (Bovine) protein is Calpain small subunit 1 (CAPNS1).